A 189-amino-acid polypeptide reads, in one-letter code: Xanthine phosphoribosyltransferase (189 aa).

Residues Leu-20 and Asn-27 each coordinate xanthine. Residue 127–131 (AYGNA) participates in 5-phospho-alpha-D-ribose 1-diphosphate binding. Residue Lys-155 coordinates xanthine.

This sequence belongs to the purine/pyrimidine phosphoribosyltransferase family. Xpt subfamily. In terms of assembly, homodimer.

It is found in the cytoplasm. The catalysed reaction is XMP + diphosphate = xanthine + 5-phospho-alpha-D-ribose 1-diphosphate. It functions in the pathway purine metabolism; XMP biosynthesis via salvage pathway; XMP from xanthine: step 1/1. Functionally, converts the preformed base xanthine, a product of nucleic acid breakdown, to xanthosine 5'-monophosphate (XMP), so it can be reused for RNA or DNA synthesis. The protein is Xanthine phosphoribosyltransferase of Bacteroides fragilis (strain ATCC 25285 / DSM 2151 / CCUG 4856 / JCM 11019 / LMG 10263 / NCTC 9343 / Onslow / VPI 2553 / EN-2).